Consider the following 135-residue polypeptide: Large ribosomal subunit protein uL22 (135 aa).

The protein belongs to the universal ribosomal protein uL22 family. As to quaternary structure, part of the 50S ribosomal subunit.

This protein binds specifically to 23S rRNA; its binding is stimulated by other ribosomal proteins, e.g. L4, L17, and L20. It is important during the early stages of 50S assembly. It makes multiple contacts with different domains of the 23S rRNA in the assembled 50S subunit and ribosome. Functionally, the globular domain of the protein is located near the polypeptide exit tunnel on the outside of the subunit, while an extended beta-hairpin is found that lines the wall of the exit tunnel in the center of the 70S ribosome. The polypeptide is Large ribosomal subunit protein uL22 (Christiangramia forsetii (strain DSM 17595 / CGMCC 1.15422 / KT0803) (Gramella forsetii)).